Consider the following 265-residue polypeptide: 6-oxopurine nucleoside phosphorylase (265 aa).

Residues Ser-10, 49–50 (RH), and 82–83 (SA) contribute to the phosphate site. 2 cysteine pairs are disulfide-bonded: Cys-136/Cys-202 and Cys-162/Cys-190. Met-187 provides a ligand contact to substrate. A phosphate-binding site is contributed by Thr-188. Residue 211–213 (NYA) participates in substrate binding. An intrachain disulfide couples Cys-254 to Cys-256.

Belongs to the PNP/MTAP phosphorylase family. MTAP subfamily. As to quaternary structure, homohexamer. Dimer of a homotrimer.

The enzyme catalyses a purine D-ribonucleoside + phosphate = a purine nucleobase + alpha-D-ribose 1-phosphate. It carries out the reaction guanosine + phosphate = alpha-D-ribose 1-phosphate + guanine. It catalyses the reaction inosine + phosphate = alpha-D-ribose 1-phosphate + hypoxanthine. It participates in purine metabolism; purine nucleoside salvage. In terms of biological role, purine nucleoside phosphorylase which is highly specific for 6-oxopurine nucleosides. Cleaves guanosine or inosine to respective bases and sugar-1-phosphate molecules. Involved in purine salvage. This is 6-oxopurine nucleoside phosphorylase from Pyrococcus furiosus (strain ATCC 43587 / DSM 3638 / JCM 8422 / Vc1).